The primary structure comprises 418 residues: MAPSIDVIPTAASTAAGMISDMEAAFKSAVKLKQIPGAVVMARSMNGDIDYTRCFGARTVERDECQRLPPMEIDTPLRLASATKLLTTIMALQCMEQGLVDLDENVNRLLPDLSDMQVLTGFDAAGNAIMRDREGIIKLRHLLTHTSGLSYAFLHPLLQEYMAKGYLKTAEKFGIQSRLAPPAINDPGVEWIYGANLDWAGKLIERATGVDLEEFMQKNICEPLGITDMTFKLQQRPDMLARRSDQTRRNENGSLRYDDSVYFRHDGEECFGGQGVFCGPESYMKVLNSLMKHDGLLLKKDTIELMFQPALDAELEKKMNDHMDTTPHINYGAALPPVMRRNFGLGGIIAMGDLDGHNWRREGSLTFGGGPNIVWQIDPTVGLCTLVVFQLEPWNDPICKDLTRKFEKAMYSQVKCRN.

Monacolin J is bound at residue Arg78. Ser81 acts as the Acyl-ester intermediate in catalysis. Residues Arg178, Tyr193, and Tyr262 each contribute to the monacolin J site. 2-methylbutanoate is bound at residue Gly370.

The protein belongs to the class-A beta-lactamase family.

It carries out the reaction ML-236A carboxylate + (S)-2-methylbutanoyl-[2-methylbutanoate polyketide synthase] = mevinic carboxylate + holo-[2-methylbutanoate polyketide synthase]. It participates in polyketide biosynthesis. Functionally, compactin diketide synthase; part of the gene cluster that mediates the biosynthesis of compactin, also known as mevastatin or ML-236B, and which acts as a potent competitive inhibitor of HMG-CoA reductase. Compactin biosynthesis is performed in two stages. The first stage is catalyzed by the nonaketide synthase mlcA, which belongs to type I polyketide synthases and catalyzes the iterative nine-step formation of the polyketide. This PKS stage is completed by the action of dehydrogenase mlcG, which catalyzes the NADPH-dependent reduction of the unsaturated tetra-, penta- and heptaketide intermediates that arise during the mlcA-mediated biosynthesis of the nonaketide chain and leads to dihydro-ML-236C carboxylate. Covalently bound dihydro-ML-236C carboxylate is released from mlcA by the mlcF esterase. Conversion of dihydro-ML-236C carboxylate into ML-236A carboxylate is subsequently performed with the participation of molecular oxygen and P450 monoogygenase mlcC. Finally, mlcH performs the conversion of ML-236A carboxylate to ML-236B/compactin carboxylate through the addition of the side-chain diketide moiety produced by the diketide synthase mlcB. This is ML-236A carboxylate methylbutanoyltransferase mlcH from Penicillium citrinum.